Consider the following 218-residue polypeptide: N-(5'-phosphoribosyl)anthranilate isomerase (218 aa).

This sequence belongs to the TrpF family.

It catalyses the reaction N-(5-phospho-beta-D-ribosyl)anthranilate = 1-(2-carboxyphenylamino)-1-deoxy-D-ribulose 5-phosphate. It participates in amino-acid biosynthesis; L-tryptophan biosynthesis; L-tryptophan from chorismate: step 3/5. This is N-(5'-phosphoribosyl)anthranilate isomerase from Rhodopseudomonas palustris (strain BisB5).